The following is a 78-amino-acid chain: MSGLGIMVLTLLLFMFMATSHQDAGEKQATQRDAINVRRRRSITRRGDEECNEHCEDRNKECCGRTNGHPRCANVCFG.

The signal sequence occupies residues 1 to 24 (MSGLGIMVLTLLLFMFMATSHQDA). Positions 25–44 (GEKQATQRDAINVRRRRSIT) are excised as a propeptide. Intrachain disulfides connect C51-C63, C55-C72, and C62-C76. F77 carries the phenylalanine amide modification.

This sequence belongs to the conotoxin O3 superfamily. As to expression, expressed by the venom duct.

The protein resides in the secreted. The chain is Conotoxin TsMSGL-13 from Conus tessulatus (Tessellate cone).